The following is a 1413-amino-acid chain: DNA-directed RNA polymerase subunit beta' (1413 aa).

The Zn(2+) site is built by cysteine 70, cysteine 72, cysteine 85, and cysteine 88. Mg(2+) is bound by residues aspartate 461, aspartate 463, and aspartate 465. Zn(2+) contacts are provided by cysteine 820, cysteine 894, cysteine 901, and cysteine 904.

The protein belongs to the RNA polymerase beta' chain family. The RNAP catalytic core consists of 2 alpha, 1 beta, 1 beta' and 1 omega subunit. When a sigma factor is associated with the core the holoenzyme is formed, which can initiate transcription. Mg(2+) is required as a cofactor. Requires Zn(2+) as cofactor.

The enzyme catalyses RNA(n) + a ribonucleoside 5'-triphosphate = RNA(n+1) + diphosphate. DNA-dependent RNA polymerase catalyzes the transcription of DNA into RNA using the four ribonucleoside triphosphates as substrates. In Cupriavidus metallidurans (strain ATCC 43123 / DSM 2839 / NBRC 102507 / CH34) (Ralstonia metallidurans), this protein is DNA-directed RNA polymerase subunit beta'.